A 182-amino-acid chain; its full sequence is UPF0149 protein CGSHiEE_07975 (182 aa).

The protein belongs to the UPF0149 family.

This chain is UPF0149 protein CGSHiEE_07975, found in Haemophilus influenzae (strain PittEE).